The chain runs to 500 residues: Aspartyl/glutamyl-tRNA(Asn/Gln) amidotransferase subunit B (500 aa).

Belongs to the GatB/GatE family. GatB subfamily. Heterotrimer of A, B and C subunits.

It catalyses the reaction L-glutamyl-tRNA(Gln) + L-glutamine + ATP + H2O = L-glutaminyl-tRNA(Gln) + L-glutamate + ADP + phosphate + H(+). The enzyme catalyses L-aspartyl-tRNA(Asn) + L-glutamine + ATP + H2O = L-asparaginyl-tRNA(Asn) + L-glutamate + ADP + phosphate + 2 H(+). Allows the formation of correctly charged Asn-tRNA(Asn) or Gln-tRNA(Gln) through the transamidation of misacylated Asp-tRNA(Asn) or Glu-tRNA(Gln) in organisms which lack either or both of asparaginyl-tRNA or glutaminyl-tRNA synthetases. The reaction takes place in the presence of glutamine and ATP through an activated phospho-Asp-tRNA(Asn) or phospho-Glu-tRNA(Gln). The polypeptide is Aspartyl/glutamyl-tRNA(Asn/Gln) amidotransferase subunit B (Thermosynechococcus vestitus (strain NIES-2133 / IAM M-273 / BP-1)).